Consider the following 509-residue polypeptide: 2,3-bisphosphoglycerate-independent phosphoglycerate mutase (509 aa).

Residues aspartate 12 and serine 62 each coordinate Mn(2+). Serine 62 functions as the Phosphoserine intermediate in the catalytic mechanism. Substrate is bound by residues histidine 123, 153-154 (RD), arginine 185, arginine 191, 260-263 (RPDR), and lysine 333. Mn(2+) is bound by residues aspartate 400, histidine 404, aspartate 441, histidine 442, and histidine 460.

This sequence belongs to the BPG-independent phosphoglycerate mutase family. Monomer. Mn(2+) serves as cofactor.

The enzyme catalyses (2R)-2-phosphoglycerate = (2R)-3-phosphoglycerate. It participates in carbohydrate degradation; glycolysis; pyruvate from D-glyceraldehyde 3-phosphate: step 3/5. In terms of biological role, catalyzes the interconversion of 2-phosphoglycerate and 3-phosphoglycerate. The chain is 2,3-bisphosphoglycerate-independent phosphoglycerate mutase from Clostridium kluyveri (strain ATCC 8527 / DSM 555 / NBRC 12016 / NCIMB 10680 / K1).